The chain runs to 663 residues: MLDIGVIGRLKFATAFMAMSLLLVPAAEAQEQPVWHYGLSLVDDLKYPPGFKKFDYVNPEAPKGGDLRLSQTGTFDTFNPLLVKGETAVGLDFVFDTLMKPSEDEISTAYGLLAEGVSFPDDISSATFRLRQEAKWADGKPVTPEDVVFSFDKAKELNPLYQSYYRHVVKAEKTGDRDVTFHFDDKNNHELPHILGQIRIVPKHWWEGTGPDGKPRDISRTTLEPVMGSGPYRIASFAPGGTIRYERRPDYWGVALNVNVGQNNFDSITYSFFGDRDVEFEAFRSGNTDYWRENQAMRWATAFDFPAVKDGRVKREEIPNPFRATAVMQAMVPNMRRKPFDDERVRQALNYALDFEELNRTIFYNQYQRVNSFFFATELASSGLPEGKELKNLNEVKDLVPPEVFTTPYSNPVGGTPQKARENLRKAIELLNKAGFELNGNRMVNTETGKPFSFEIMLSSPSFERVALPYAQNLKRIGIEARVRTVDPSQYTNRKRAFDYDVTWEVWGQSLSPGNEQADYWGSAAATRQGSRNYAGISDPGVDALIERVIFAKDRETLVAATKALDRVLLAHNYVIPLYYKLAAQIAYWDALARPKELPKYGLGFPEVWWSKSAACHLPAGVRCSCICGSSGEAGRHQFTPDRRLIRNAQLLDQICAASEFKG.

The signal sequence occupies residues 1–29 (MLDIGVIGRLKFATAFMAMSLLLVPAAEA).

It belongs to the bacterial solute-binding protein 5 family.

It localises to the periplasm. Functionally, possible binding-protein with either a transport or enzymatic activity. This is an uncharacterized protein from Sinorhizobium fredii (strain NBRC 101917 / NGR234).